The sequence spans 376 residues: Cyclin-dependent kinase 9-A (376 aa).

Positions 19 to 319 constitute a Protein kinase domain; sequence YERLAKIGQG…SDDALNNDFF (301 aa). ATP is bound by residues 25–33 and K48; that span reads IGQGTFGEV. D153 serves as the catalytic Proton acceptor. The disordered stretch occupies residues 345 to 376; it reads PPRRRGGHMPQQPANQARNPAATNQSEFERVF. The span at 354-369 shows a compositional bias: low complexity; that stretch reads PQQPANQARNPAATNQ.

The protein belongs to the protein kinase superfamily. CMGC Ser/Thr protein kinase family. CDC2/CDKX subfamily. In terms of assembly, associates with cyclin-T to form P-TEFb.

Its subcellular location is the nucleus. It carries out the reaction L-seryl-[protein] + ATP = O-phospho-L-seryl-[protein] + ADP + H(+). The enzyme catalyses L-threonyl-[protein] + ATP = O-phospho-L-threonyl-[protein] + ADP + H(+). It catalyses the reaction [DNA-directed RNA polymerase] + ATP = phospho-[DNA-directed RNA polymerase] + ADP + H(+). In terms of biological role, member of the cyclin-dependent kinase pair (CDK9/cyclin-T) complex, also called positive transcription elongation factor B (P-TEFb), which is proposed to facilitate the transition from abortive to production elongation by phosphorylating the CTD (C-terminal domain) of the large subunit of RNA polymerase II (RNAP II) and SUPT5H. This chain is Cyclin-dependent kinase 9-A (cdk9-a), found in Xenopus laevis (African clawed frog).